The following is a 200-amino-acid chain: ATP-dependent Clp protease proteolytic subunit 1 (200 aa).

S102 serves as the catalytic Nucleophile. H127 is a catalytic residue.

This sequence belongs to the peptidase S14 family. In terms of assembly, fourteen ClpP subunits assemble into 2 heptameric rings which stack back to back to give a disk-like structure with a central cavity, resembling the structure of eukaryotic proteasomes.

The protein resides in the cytoplasm. It catalyses the reaction Hydrolysis of proteins to small peptides in the presence of ATP and magnesium. alpha-casein is the usual test substrate. In the absence of ATP, only oligopeptides shorter than five residues are hydrolyzed (such as succinyl-Leu-Tyr-|-NHMec, and Leu-Tyr-Leu-|-Tyr-Trp, in which cleavage of the -Tyr-|-Leu- and -Tyr-|-Trp bonds also occurs).. Its function is as follows. Cleaves peptides in various proteins in a process that requires ATP hydrolysis. Has a chymotrypsin-like activity. Plays a major role in the degradation of misfolded proteins. In Bradyrhizobium diazoefficiens (strain JCM 10833 / BCRC 13528 / IAM 13628 / NBRC 14792 / USDA 110), this protein is ATP-dependent Clp protease proteolytic subunit 1.